Here is a 205-residue protein sequence, read N- to C-terminus: Small ribosomal subunit protein uS4 (205 aa).

The region spanning serine 94–leucine 157 is the S4 RNA-binding domain.

Belongs to the universal ribosomal protein uS4 family. As to quaternary structure, part of the 30S ribosomal subunit. Contacts protein S5. The interaction surface between S4 and S5 is involved in control of translational fidelity.

In terms of biological role, one of the primary rRNA binding proteins, it binds directly to 16S rRNA where it nucleates assembly of the body of the 30S subunit. Functionally, with S5 and S12 plays an important role in translational accuracy. The polypeptide is Small ribosomal subunit protein uS4 (Hyphomonas neptunium (strain ATCC 15444)).